The following is a 262-amino-acid chain: Ribose-5-phosphate isomerase A (262 aa).

Substrate is bound by residues 33-36 (TGST), 89-92 (DGAD), and 102-105 (KGGG). Catalysis depends on Glu111, which acts as the Proton acceptor. Substrate is bound at residue Lys129.

The protein belongs to the ribose 5-phosphate isomerase family. In terms of assembly, homodimer.

The catalysed reaction is aldehydo-D-ribose 5-phosphate = D-ribulose 5-phosphate. It functions in the pathway carbohydrate degradation; pentose phosphate pathway; D-ribose 5-phosphate from D-ribulose 5-phosphate (non-oxidative stage): step 1/1. Its function is as follows. Catalyzes the reversible conversion of ribose-5-phosphate to ribulose 5-phosphate. The polypeptide is Ribose-5-phosphate isomerase A (Cereibacter sphaeroides (strain ATCC 17023 / DSM 158 / JCM 6121 / CCUG 31486 / LMG 2827 / NBRC 12203 / NCIMB 8253 / ATH 2.4.1.) (Rhodobacter sphaeroides)).